We begin with the raw amino-acid sequence, 284 residues long: Bifunctional protein FolD 2 (284 aa).

NADP(+) is bound by residues 166–168 (GAS) and Ile232.

This sequence belongs to the tetrahydrofolate dehydrogenase/cyclohydrolase family. As to quaternary structure, homodimer.

The enzyme catalyses (6R)-5,10-methylene-5,6,7,8-tetrahydrofolate + NADP(+) = (6R)-5,10-methenyltetrahydrofolate + NADPH. It carries out the reaction (6R)-5,10-methenyltetrahydrofolate + H2O = (6R)-10-formyltetrahydrofolate + H(+). It participates in one-carbon metabolism; tetrahydrofolate interconversion. Functionally, catalyzes the oxidation of 5,10-methylenetetrahydrofolate to 5,10-methenyltetrahydrofolate and then the hydrolysis of 5,10-methenyltetrahydrofolate to 10-formyltetrahydrofolate. This is Bifunctional protein FolD 2 from Pseudomonas putida (strain ATCC 47054 / DSM 6125 / CFBP 8728 / NCIMB 11950 / KT2440).